A 143-amino-acid chain; its full sequence is S-adenosylmethionine decarboxylase proenzyme (143 aa).

The Schiff-base intermediate with substrate; via pyruvic acid role is filled by serine 66. Position 66 is a pyruvic acid (Ser); by autocatalysis (serine 66). Histidine 71 (proton acceptor; for processing activity) is an active-site residue. Cysteine 86 acts as the Proton donor; for catalytic activity in catalysis.

It belongs to the prokaryotic AdoMetDC family. Type 1 subfamily. Heterotetramer of two alpha and two beta chains arranged as a dimer of alpha/beta heterodimers. Pyruvate is required as a cofactor. In terms of processing, is synthesized initially as an inactive proenzyme. Formation of the active enzyme involves a self-maturation process in which the active site pyruvoyl group is generated from an internal serine residue via an autocatalytic post-translational modification. Two non-identical subunits are generated from the proenzyme in this reaction, and the pyruvate is formed at the N-terminus of the alpha chain, which is derived from the carboxyl end of the proenzyme. The post-translation cleavage follows an unusual pathway, termed non-hydrolytic serinolysis, in which the side chain hydroxyl group of the serine supplies its oxygen atom to form the C-terminus of the beta chain, while the remainder of the serine residue undergoes an oxidative deamination to produce ammonia and the pyruvoyl group blocking the N-terminus of the alpha chain.

It catalyses the reaction S-adenosyl-L-methionine + H(+) = S-adenosyl 3-(methylsulfanyl)propylamine + CO2. Its pathway is amine and polyamine biosynthesis; S-adenosylmethioninamine biosynthesis; S-adenosylmethioninamine from S-adenosyl-L-methionine: step 1/1. Functionally, catalyzes the decarboxylation of S-adenosylmethionine to S-adenosylmethioninamine (dcAdoMet), the propylamine donor required for the synthesis of the polyamines spermine and spermidine from the diamine putrescine. This Thermococcus kodakarensis (strain ATCC BAA-918 / JCM 12380 / KOD1) (Pyrococcus kodakaraensis (strain KOD1)) protein is S-adenosylmethionine decarboxylase proenzyme.